A 135-amino-acid chain; its full sequence is Glutaredoxin-C3 (135 aa).

The 109-residue stretch at 26-134 folds into the Glutaredoxin domain; the sequence is VARVERLASE…PLLKEAGALW (109 aa). Cys46 and Cys49 are disulfide-bonded. Residues 132-135 carry the Responsive for interaction with TGA factors motif; the sequence is ALWL.

The protein belongs to the glutaredoxin family. CC-type subfamily.

Its subcellular location is the cytoplasm. The protein localises to the nucleus. Has a glutathione-disulfide oxidoreductase activity in the presence of NADPH and glutathione reductase. Reduces low molecular weight disulfides and proteins. The polypeptide is Glutaredoxin-C3 (GRXC3) (Oryza sativa subsp. japonica (Rice)).